A 470-amino-acid polypeptide reads, in one-letter code: Synaptotagmin-17 (470 aa).

The tract at residues 54-112 is disordered; sequence PPWLMASRSNDKDGDSVHTASDVPLTPRTNSPDGRRSSSDTSKSTYSLTRRISSLDSRR. A compositionally biased stretch (low complexity) spans 92 to 112; it reads SDTSKSTYSLTRRISSLDSRR. Residues Ser114 and Ser115 each carry the phosphoserine modification. C2 domains lie at 180 to 306 and 317 to 451; these read QLGM…HWWK and ELGE…EQWH.

This sequence belongs to the synaptotagmin family.

It is found in the membrane. Plays a role in dendrite formation by melanocytes. This chain is Synaptotagmin-17 (Syt17), found in Mus musculus (Mouse).